A 259-amino-acid chain; its full sequence is Ribosomal RNA small subunit methyltransferase J (259 aa).

Residues 101–102 (RD), 117–118 (ER), 153–154 (SS), and D176 each bind S-adenosyl-L-methionine.

Belongs to the methyltransferase superfamily. RsmJ family.

The protein resides in the cytoplasm. It carries out the reaction guanosine(1516) in 16S rRNA + S-adenosyl-L-methionine = N(2)-methylguanosine(1516) in 16S rRNA + S-adenosyl-L-homocysteine + H(+). Functionally, specifically methylates the guanosine in position 1516 of 16S rRNA. The sequence is that of Ribosomal RNA small subunit methyltransferase J from Vibrio parahaemolyticus serotype O3:K6 (strain RIMD 2210633).